The primary structure comprises 337 residues: Putative [LysW]-lysine/[LysW]-ornithine hydrolase (337 aa).

Residue His-67 participates in Zn(2+) binding. Residue Asp-69 is part of the active site. A Zn(2+)-binding site is contributed by Asp-91. Residue Glu-118 is the Proton acceptor of the active site. Positions 119, 140, and 298 each coordinate Zn(2+).

The protein belongs to the peptidase M20A family. LysK subfamily. Requires Zn(2+) as cofactor. Co(2+) serves as cofactor.

It localises to the cytoplasm. It catalyses the reaction [amino-group carrier protein]-C-terminal-gamma-(L-lysyl)-L-glutamate + H2O = [amino-group carrier protein]-C-terminal-L-glutamate + L-lysine. The enzyme catalyses [amino-group carrier protein]-C-terminal-gamma-(L-ornithyl)-L-glutamate + H2O = [amino-group carrier protein]-C-terminal-L-glutamate + L-ornithine. Its pathway is amino-acid biosynthesis; L-lysine biosynthesis via AAA pathway; L-lysine from L-alpha-aminoadipate (Thermus route): step 5/5. The protein operates within amino-acid biosynthesis; L-arginine biosynthesis. Functionally, catalyzes the release of L-lysine from [LysW]-gamma-L-lysine and the release of L-ornithine from [LysW]-L-ornithine. This Pyrococcus abyssi (strain GE5 / Orsay) protein is Putative [LysW]-lysine/[LysW]-ornithine hydrolase.